Consider the following 2510-residue polypeptide: Highly reducing polyketide synthase g433 (2510 aa).

The disordered stretch occupies residues 1 to 54 (MAPGRTDVTVAENGNGLHTAHNGVSNGTSNGTNGTSHTSNGTNSSAKTTSNGVH). Residues 22 to 45 (NGVSNGTSNGTNGTSHTSNGTNSS) are compositionally biased toward low complexity. A Ketosynthase family 3 (KS3) domain is found at 58 to 477 (DIPIAIVGMG…GANAHAVIDS (420 aa)). Residues Cys-229, His-365, and His-400 each act as for beta-ketoacyl synthase activity in the active site. The segment at 574-880 (FVFTGQGAQW…VPTLVRGQND (307 aa)) is malonyl-CoA:ACP transacylase (MAT) domain. The segment at 942–1070 (HDLLGCQVFE…GQVKAGRADS (129 aa)) is N-terminal hotdog fold. A dehydratase (DH) domain region spans residues 942–1226 (HDLLGCQVFE…NLRLAPAADD (285 aa)). One can recognise a PKS/mFAS DH domain in the interval 942–1229 (HDLLGCQVFE…LAPAADDTGG (288 aa)). Residue His-974 is the Proton acceptor; for dehydratase activity of the active site. Residues 1083–1229 (PRKVSSTRWY…LAPAADDTGG (147 aa)) are C-terminal hotdog fold. Asp-1144 (proton donor; for dehydratase activity) is an active-site residue. Positions 1395-1574 (DFLGLVSHDK…FDGAEAVIYD (180 aa)) are methyltransferase (CMet) domain. The segment at 1787 to 2097 (GSLKTLRWVQ…KGQHMGKLVI (311 aa)) is enoyl reductase (ER) (ER) domain. The tract at residues 2122-2296 (SYLLVGGLGG…ASVLDISIIE (175 aa)) is ketoreductase (KR) domain. The region spanning 2419 to 2496 (SSVSFLANEI…KLGEAAAEGL (78 aa)) is the Carrier domain. Ser-2456 carries the post-translational modification O-(pantetheine 4'-phosphoryl)serine.

The protein operates within mycotoxin biosynthesis. Functionally, highly reducing polyketide synthase; part of the gene cluster that mediates the biosynthesis of 1233A, a natural compound known as an inhibitor of HMG-CoA synthase in the mevalonate pathway and with antibacterial and antifungal activities. The highly reducing polyketide synthase g433 gene is responsible for the 1233A backbone biosynthesis and the cytochrome P450 monooxygenase g430 catalyzes oxidation of the backbone. This chain is Highly reducing polyketide synthase g433, found in Fusarium sp.